We begin with the raw amino-acid sequence, 201 residues long: Small ribosomal subunit protein uS4 (201 aa).

Positions 1–42 (MARYTGPATRKSRRLGVDLVGGDQSFEKRPYPPGQHGRARIK) are disordered. Residues 91–157 (SRLDNVVYRA…LPFQIARETA (67 aa)) form the S4 RNA-binding domain.

This sequence belongs to the universal ribosomal protein uS4 family. As to quaternary structure, part of the 30S ribosomal subunit. Contacts protein S5. The interaction surface between S4 and S5 is involved in control of translational fidelity.

Its function is as follows. One of the primary rRNA binding proteins, it binds directly to 16S rRNA where it nucleates assembly of the body of the 30S subunit. With S5 and S12 plays an important role in translational accuracy. The protein is Small ribosomal subunit protein uS4 of Mycolicibacterium smegmatis (strain ATCC 700084 / mc(2)155) (Mycobacterium smegmatis).